The sequence spans 260 residues: Small ribosomal subunit protein uS2 (260 aa).

Belongs to the universal ribosomal protein uS2 family.

This Roseobacter denitrificans (strain ATCC 33942 / OCh 114) (Erythrobacter sp. (strain OCh 114)) protein is Small ribosomal subunit protein uS2.